Here is a 174-residue protein sequence, read N- to C-terminus: Crossover junction endodeoxyribonuclease RuvC (174 aa).

Residues D8, E67, and D139 contribute to the active site. Mg(2+) is bound by residues D8, E67, and D139.

It belongs to the RuvC family. As to quaternary structure, homodimer which binds Holliday junction (HJ) DNA. The HJ becomes 2-fold symmetrical on binding to RuvC with unstacked arms; it has a different conformation from HJ DNA in complex with RuvA. In the full resolvosome a probable DNA-RuvA(4)-RuvB(12)-RuvC(2) complex forms which resolves the HJ. Requires Mg(2+) as cofactor.

It is found in the cytoplasm. The catalysed reaction is Endonucleolytic cleavage at a junction such as a reciprocal single-stranded crossover between two homologous DNA duplexes (Holliday junction).. In terms of biological role, the RuvA-RuvB-RuvC complex processes Holliday junction (HJ) DNA during genetic recombination and DNA repair. Endonuclease that resolves HJ intermediates. Cleaves cruciform DNA by making single-stranded nicks across the HJ at symmetrical positions within the homologous arms, yielding a 5'-phosphate and a 3'-hydroxyl group; requires a central core of homology in the junction. The consensus cleavage sequence is 5'-(A/T)TT(C/G)-3'. Cleavage occurs on the 3'-side of the TT dinucleotide at the point of strand exchange. HJ branch migration catalyzed by RuvA-RuvB allows RuvC to scan DNA until it finds its consensus sequence, where it cleaves and resolves the cruciform DNA. In Pseudomonas putida (strain ATCC 700007 / DSM 6899 / JCM 31910 / BCRC 17059 / LMG 24140 / F1), this protein is Crossover junction endodeoxyribonuclease RuvC.